The primary structure comprises 313 residues: Epoxide hydrolase 1 (313 aa).

The region spanning P25–A299 is the AB hydrolase-1 domain. D100 serves as the catalytic Nucleophile. Y149 contributes to the an epoxide binding site. Y227 serves as the catalytic Proton donor. H292 functions as the Proton acceptor in the catalytic mechanism.

Belongs to the AB hydrolase superfamily. Epoxide hydrolase family. As to quaternary structure, homodimer. Highly expressed in fruits 15 days after anthesis (15-DAA).

It carries out the reaction an epoxide + H2O = an ethanediol. The catalysed reaction is (24S)-24,25-epoxycucurbitadienol + H2O = (24R)-24,25-dihydroxycucurbitadienol. It functions in the pathway secondary metabolite biosynthesis; terpenoid biosynthesis. Functionally, epoxide hydrolase involved in the biosynthesis of cucurbitacin and mogroside tetracyclic triterpene natural products (e.g. siamenoside I and mogrosides IV, V and VI). Cucurbitacins have cytotoxic properties and exhibit deterrent taste as a defense barrier against herbivores. Mogrosides are nonsugar highly oxygenated compounds used as high-intensity zero-calorie sweeteners; they also possess pharmacological properties such as regulating immunity, lowering blood sugar and lipid levels, protecting the liver, and acting as antioxidants and antitumor agents. Catalyzes the hydrolysis of aromatic epoxide-containing substrates, such as the conversion of 24,25-epoxycucurbitadienol to 24,25-dihydroxycucurbitadienol. This Siraitia grosvenorii (Monk's fruit) protein is Epoxide hydrolase 1.